The primary structure comprises 122 residues: Cytochrome b-c1 complex subunit 7-1, mitochondrial (122 aa).

It belongs to the UQCRB/QCR7 family. As to quaternary structure, component of the ubiquinol-cytochrome c oxidoreductase (cytochrome b-c1 complex, complex III, CIII), a multisubunit enzyme composed of 10 subunits. The complex is composed of 3 respiratory subunits cytochrome b (MT-CYB), cytochrome c1 (CYC1-1 or CYC1-2) and Rieske protein (UCR1-1 or UCR1-2), 2 core protein subunits MPPalpha1 (or MPPalpha2) and MPPB, and 5 low-molecular weight protein subunits QCR7-1 (or QCR7-2), UCRQ-1 (or UCRQ-2), QCR9, UCRY and probably QCR6-1 (or QCR6-2). The complex exists as an obligatory dimer and forms supercomplexes (SCs) in the inner mitochondrial membrane with NADH-ubiquinone oxidoreductase (complex I, CI), resulting in different assemblies (supercomplexes SCI(1)III(2) and SCI(2)III(4)).

The protein localises to the mitochondrion inner membrane. In terms of biological role, component of the ubiquinol-cytochrome c oxidoreductase, a multisubunit transmembrane complex that is part of the mitochondrial electron transport chain which drives oxidative phosphorylation. The respiratory chain contains 3 multisubunit complexes succinate dehydrogenase (complex II, CII), ubiquinol-cytochrome c oxidoreductase (cytochrome b-c1 complex, complex III, CIII) and cytochrome c oxidase (complex IV, CIV), that cooperate to transfer electrons derived from NADH and succinate to molecular oxygen, creating an electrochemical gradient over the inner membrane that drives transmembrane transport and the ATP synthase. The cytochrome b-c1 complex catalyzes electron transfer from ubiquinol to cytochrome c, linking this redox reaction to translocation of protons across the mitochondrial inner membrane, with protons being carried across the membrane as hydrogens on the quinol. In the process called Q cycle, 2 protons are consumed from the matrix, 4 protons are released into the intermembrane space and 2 electrons are passed to cytochrome c. The polypeptide is Cytochrome b-c1 complex subunit 7-1, mitochondrial (QCR7-1) (Arabidopsis thaliana (Mouse-ear cress)).